The following is a 500-amino-acid chain: Histidine ammonia-lyase (500 aa).

The 5-imidazolinone (Ala-Gly) cross-link spans 141-143 (ASG). Ser-142 carries the post-translational modification 2,3-didehydroalanine (Ser).

Belongs to the PAL/histidase family. In terms of processing, contains an active site 4-methylidene-imidazol-5-one (MIO), which is formed autocatalytically by cyclization and dehydration of residues Ala-Ser-Gly.

Its subcellular location is the cytoplasm. It catalyses the reaction L-histidine = trans-urocanate + NH4(+). Its pathway is amino-acid degradation; L-histidine degradation into L-glutamate; N-formimidoyl-L-glutamate from L-histidine: step 1/3. This chain is Histidine ammonia-lyase, found in Shouchella clausii (strain KSM-K16) (Alkalihalobacillus clausii).